We begin with the raw amino-acid sequence, 568 residues long: Putative DEAD-box RNA helicase HEL64 (568 aa).

The interval 1–34 is disordered; that stretch reads MEETYSPFTGRQGQYNQGYNGGGRRDSRGGMGER. The segment covering 23-34 has biased composition (basic and acidic residues); it reads GRRDSRGGMGER. The Q motif motif lies at 102-130; sequence FDHLCGIVPPYLLKKLTAQNFTAPTPVQA. The Helicase ATP-binding domain occupies 133–307; it reads WPVLLSGRDL…AEFQKQWIRI (175 aa). Residue 146 to 153 participates in ATP binding; sequence AKTGSGKT. The short motif at 255–258 is the DEAD box element; the sequence is DEAD. Residues 335–483 enclose the Helicase C-terminal domain; that stretch reads ELRKLMQEHR…EIPDWMIEWN (149 aa).

The protein belongs to the DEAD box helicase family. DDX5/DBP2 subfamily.

It is found in the nucleus. The enzyme catalyses ATP + H2O = ADP + phosphate + H(+). In Trypanosoma brucei brucei, this protein is Putative DEAD-box RNA helicase HEL64 (HEL64).